The primary structure comprises 97 residues: DNA-binding protein HU (97 aa).

It belongs to the bacterial histone-like protein family. In terms of assembly, has been isolated in complexes with 5S rRNA and bL25, and with 5S rRNA, bL25 and uL5. Homodimer.

Functionally, histone-like DNA-binding protein which is capable of wrapping DNA to stabilize it, and thus to prevent its denaturation under extreme environmental conditions. This chain is DNA-binding protein HU, found in Thermus thermophilus (strain ATCC 27634 / DSM 579 / HB8).